A 227-amino-acid polypeptide reads, in one-letter code: Ribonuclease 3 (227 aa).

One can recognise an RNase III domain in the interval 4-126 (LDRLERKIGY…IIGAMSLDQG (123 aa)). Residue Glu-39 participates in Mg(2+) binding. The active site involves Asp-43. Asp-112 and Glu-115 together coordinate Mg(2+). Glu-115 is an active-site residue. Residues 153–226 (DAKTRLQEYL…AEQILKELDI (74 aa)) enclose the DRBM domain.

Belongs to the ribonuclease III family. In terms of assembly, homodimer. Mg(2+) serves as cofactor.

It is found in the cytoplasm. It catalyses the reaction Endonucleolytic cleavage to 5'-phosphomonoester.. Its function is as follows. Digests double-stranded RNA. Involved in the processing of primary rRNA transcript to yield the immediate precursors to the large and small rRNAs (23S and 16S). Processes some mRNAs, and tRNAs when they are encoded in the rRNA operon. Processes pre-crRNA and tracrRNA of type II CRISPR loci if present in the organism. This chain is Ribonuclease 3, found in Haemophilus influenzae (strain 86-028NP).